The chain runs to 586 residues: Aspartate--tRNA(Asp/Asn) ligase (586 aa).

Position 172 (Glu-172) interacts with L-aspartate. An aspartate region spans residues Gln-196–Lys-199. An L-aspartate-binding site is contributed by Arg-218. ATP-binding positions include Arg-218 to Glu-220 and Gln-227. His-446 contributes to the L-aspartate binding site. Glu-480 provides a ligand contact to ATP. L-aspartate is bound at residue Arg-487. Gly-532–Arg-535 is an ATP binding site.

Belongs to the class-II aminoacyl-tRNA synthetase family. Type 1 subfamily. Homodimer.

The protein resides in the cytoplasm. It carries out the reaction tRNA(Asx) + L-aspartate + ATP = L-aspartyl-tRNA(Asx) + AMP + diphosphate. In terms of biological role, aspartyl-tRNA synthetase with relaxed tRNA specificity since it is able to aspartylate not only its cognate tRNA(Asp) but also tRNA(Asn). Reaction proceeds in two steps: L-aspartate is first activated by ATP to form Asp-AMP and then transferred to the acceptor end of tRNA(Asp/Asn). The polypeptide is Aspartate--tRNA(Asp/Asn) ligase (Borrelia garinii subsp. bavariensis (strain ATCC BAA-2496 / DSM 23469 / PBi) (Borreliella bavariensis)).